The primary structure comprises 154 residues: 6,7-dimethyl-8-ribityllumazine synthase (154 aa).

Residues Phe26, 60–62 (ALE), and 84–86 (CII) contribute to the 5-amino-6-(D-ribitylamino)uracil site. A (2S)-2-hydroxy-3-oxobutyl phosphate-binding site is contributed by 89-90 (ET). Residue His92 is the Proton donor of the active site. Asn117 is a binding site for 5-amino-6-(D-ribitylamino)uracil. Arg131 serves as a coordination point for (2S)-2-hydroxy-3-oxobutyl phosphate.

It belongs to the DMRL synthase family.

It catalyses the reaction (2S)-2-hydroxy-3-oxobutyl phosphate + 5-amino-6-(D-ribitylamino)uracil = 6,7-dimethyl-8-(1-D-ribityl)lumazine + phosphate + 2 H2O + H(+). The protein operates within cofactor biosynthesis; riboflavin biosynthesis; riboflavin from 2-hydroxy-3-oxobutyl phosphate and 5-amino-6-(D-ribitylamino)uracil: step 1/2. In terms of biological role, catalyzes the formation of 6,7-dimethyl-8-ribityllumazine by condensation of 5-amino-6-(D-ribitylamino)uracil with 3,4-dihydroxy-2-butanone 4-phosphate. This is the penultimate step in the biosynthesis of riboflavin. The sequence is that of 6,7-dimethyl-8-ribityllumazine synthase from Leptothrix cholodnii (strain ATCC 51168 / LMG 8142 / SP-6) (Leptothrix discophora (strain SP-6)).